The following is a 530-amino-acid chain: White collar 2 protein (530 aa).

A run of 7 repeats spans residues 9 to 12 (GSSM), 21 to 24 (GSGM), 25 to 28 (GSGM), 29 to 32 (GSGM), 33 to 36 (GTGM), 37 to 40 (GTGM), and 41 to 44 (GTGM). A 7 X 4 AA repeats of G-[SAT]-G-M region spans residues 9-44 (GSSMYGFGAMGMGSGMGSGMGSGMGTGMGTGMGTGM). The tract at residues 134 to 158 (IATPTTTTSGPSGGPSSGGGSTLTE) is disordered. A compositionally biased stretch (gly residues) spans 144-154 (PSGGPSSGGGS). The 71-residue stretch at 162-232 (RRNWPAKVVE…AELNEAIATG (71 aa)) folds into the PAS domain. Residues 315–343 (REEQEEQEESHRTWRMSQEGRSDVTPSDD) are disordered. A GATA-type zinc finger spans residues 468 to 493 (CTDCGTLDSPEWRKGPSGPKTLCNAC). Residues 504–530 (KNANNNNNGGGIGGHNDIHTPMGDHMG) form a disordered region.

As to quaternary structure, heterodimer of wc-1 and wc-2 (Potential). Binds to DNA.

It is found in the nucleus. In terms of biological role, may function as a transcription factor involved in light regulation. Binds and affects blue light regulation of the al-3 gene. Wc-1 and wc-2 interact via homologous PAS domains, bind to promoters of light regulated genes such as frq, and activate transcription. May bind directly to frq. This is White collar 2 protein (wc-2) from Neurospora crassa (strain ATCC 24698 / 74-OR23-1A / CBS 708.71 / DSM 1257 / FGSC 987).